The sequence spans 354 residues: Guanine nucleotide-binding protein alpha-3 subunit (354 aa).

Residue G2 is the site of N-myristoyl glycine attachment. Residue C4 is the site of S-palmitoyl cysteine attachment. Residues 32–354 (KVVKLLLLGA…QANLQGCGLY (323 aa)) form the G-alpha domain. The segment at 35 to 48 (KLLLLGAGECGKST) is G1 motif. GTP is bound by residues 40-47 (GAGECGKS), 176-182 (LLSRIKT), 201-205 (DVGGQ), 270-273 (NKKD), and A326. S47 and T182 together coordinate Mg(2+). Positions 174 to 182 (DILLSRIKT) are G2 motif. Positions 197-206 (FRVFDVGGQR) are G3 motif. The segment at 266-273 (ILFLNKKD) is G4 motif. The segment at 324 to 329 (TCATDT) is G5 motif.

This sequence belongs to the G-alpha family. G(q) subfamily. As to quaternary structure, g proteins are composed of 3 units; alpha, beta and gamma. The alpha chain contains the guanine nucleotide binding site.

Functionally, guanine nucleotide-binding proteins (G proteins) are involved as modulators or transducers in various transmembrane signaling systems. Promotes transcription of 3',5'-cyclic phosphodiesterases pde-1 and pde-5, leading to reduced cGMP levels in sensory neurons. This causes suppression of insulin production and signaling which leads to increased daf-16 activity and contributes to increased adult lifespan and resistance to oxidative stress. In addition, by reducing cGMP levels, inhibits TGF-beta signaling pathways. Involved in behavioral response to P.aeruginosa by controlling the expression of daf-7, a member of the TGF-beta family, in ASJ sensory neurons. This chain is Guanine nucleotide-binding protein alpha-3 subunit (gpa-3), found in Caenorhabditis briggsae.